The sequence spans 209 residues: Probable GTP-binding protein EngB (209 aa).

In terms of domain architecture, EngB-type G spans threonine 22–alanine 198. 2 residues coordinate Mg(2+): serine 37 and threonine 59.

The protein belongs to the TRAFAC class TrmE-Era-EngA-EngB-Septin-like GTPase superfamily. EngB GTPase family. It depends on Mg(2+) as a cofactor.

Its function is as follows. Necessary for normal cell division and for the maintenance of normal septation. The polypeptide is Probable GTP-binding protein EngB (Neisseria meningitidis serogroup B (strain ATCC BAA-335 / MC58)).